The chain runs to 215 residues: Glycerol-3-phosphate acyltransferase (215 aa).

The next 6 helical transmembrane spans lie at 3 to 23 (LILLILTAYLLGSIPTGLWIG), 42 to 61 (TNTFRILGLKAGAATLLIDI), 68 to 90 (TLLPVLVGASNVSPIAIGFFAVL), 110 to 130 (AGVLLGFAPLYLLFLAAVFVL), 134 to 154 (LFSMISLASLTASVVAVISVL), and 162 to 182 (LLPGYDWLLTITIVVLAAIII).

Belongs to the PlsY family. As to quaternary structure, probably interacts with PlsX.

It is found in the cell membrane. It carries out the reaction an acyl phosphate + sn-glycerol 3-phosphate = a 1-acyl-sn-glycero-3-phosphate + phosphate. Its pathway is lipid metabolism; phospholipid metabolism. In terms of biological role, catalyzes the transfer of an acyl group from acyl-phosphate (acyl-PO(4)) to glycerol-3-phosphate (G3P) to form lysophosphatidic acid (LPA). This enzyme utilizes acyl-phosphate as fatty acyl donor, but not acyl-CoA or acyl-ACP. This Streptococcus equi subsp. zooepidemicus (strain MGCS10565) protein is Glycerol-3-phosphate acyltransferase.